Consider the following 97-residue polypeptide: Co-chaperonin GroES (97 aa).

It belongs to the GroES chaperonin family. In terms of assembly, heptamer of 7 subunits arranged in a ring. Interacts with the chaperonin GroEL.

Its subcellular location is the cytoplasm. Its function is as follows. Together with the chaperonin GroEL, plays an essential role in assisting protein folding. The GroEL-GroES system forms a nano-cage that allows encapsulation of the non-native substrate proteins and provides a physical environment optimized to promote and accelerate protein folding. GroES binds to the apical surface of the GroEL ring, thereby capping the opening of the GroEL channel. The protein is Co-chaperonin GroES of Pseudomonas savastanoi pv. phaseolicola (strain 1448A / Race 6) (Pseudomonas syringae pv. phaseolicola (strain 1448A / Race 6)).